A 118-amino-acid polypeptide reads, in one-letter code: DNA polymerase epsilon subunit 4 (118 aa).

2 stretches are compositionally biased toward low complexity: residues M1–T11 and G19–G35. The segment at M1–V37 is disordered. A2 bears the N-acetylalanine mark. Position 11 is a phosphothreonine (T11). Position 25 is a phosphoserine (S25).

Component of the DNA polymerase epsilon complex consisting of four subunits: the catalytic subunit POLE and the accessory subunits POLE2, POLE3 and POLE4. Interaction with POLE3 is a prerequisite for further binding with POLE and POLE2.

The protein localises to the nucleus. Its function is as follows. Accessory component of the DNA polymerase epsilon complex. Participates in DNA repair and in chromosomal DNA replication. In Mus musculus (Mouse), this protein is DNA polymerase epsilon subunit 4 (Pole4).